The chain runs to 248 residues: Putative TrmH family tRNA/rRNA methyltransferase (248 aa).

The S-adenosyl-L-methionine site is built by G196, I216, and L225.

It belongs to the class IV-like SAM-binding methyltransferase superfamily. RNA methyltransferase TrmH family.

This is Putative TrmH family tRNA/rRNA methyltransferase from Staphylococcus aureus (strain Mu50 / ATCC 700699).